The following is a 343-amino-acid chain: Phosphate acyltransferase (343 aa).

Belongs to the PlsX family. As to quaternary structure, homodimer. Probably interacts with PlsY.

Its subcellular location is the cytoplasm. It catalyses the reaction a fatty acyl-[ACP] + phosphate = an acyl phosphate + holo-[ACP]. The protein operates within lipid metabolism; phospholipid metabolism. Its function is as follows. Catalyzes the reversible formation of acyl-phosphate (acyl-PO(4)) from acyl-[acyl-carrier-protein] (acyl-ACP). This enzyme utilizes acyl-ACP as fatty acyl donor, but not acyl-CoA. The protein is Phosphate acyltransferase of Halorhodospira halophila (strain DSM 244 / SL1) (Ectothiorhodospira halophila (strain DSM 244 / SL1)).